The primary structure comprises 637 residues: Biosynthetic arginine decarboxylase (637 aa).

An N6-(pyridoxal phosphate)lysine modification is found at lysine 101. Position 286-296 (286-296) interacts with substrate; it reads FDVGGGLAVDY.

It belongs to the Orn/Lys/Arg decarboxylase class-II family. SpeA subfamily. Requires Mg(2+) as cofactor. Pyridoxal 5'-phosphate serves as cofactor.

It carries out the reaction L-arginine + H(+) = agmatine + CO2. The protein operates within amine and polyamine biosynthesis; agmatine biosynthesis; agmatine from L-arginine: step 1/1. In terms of biological role, catalyzes the biosynthesis of agmatine from arginine. The chain is Biosynthetic arginine decarboxylase from Shewanella putrefaciens (strain CN-32 / ATCC BAA-453).